A 376-amino-acid polypeptide reads, in one-letter code: Actin-related protein T1 (376 aa).

The protein belongs to the actin family.

The protein localises to the cytoplasm. It is found in the cytoskeleton. Its subcellular location is the nucleus. The protein resides in the cytoplasmic vesicle. It localises to the secretory vesicle. The protein localises to the acrosome. Negatively regulates the Hedgehog (SHH) signaling. Binds to the promoter of the SHH signaling mediator, GLI1, and inhibits its expression. This is Actin-related protein T1 (Actrt1) from Mus musculus (Mouse).